The chain runs to 967 residues: Aminopeptidase N (967 aa).

Over Met1–Ser8 the chain is Cytoplasmic. Residues Lys9–Val32 form a helical; Signal-anchor for type II membrane protein membrane-spanning segment. The segment at Tyr33–Ser66 is cytosolic Ser/Thr-rich junction. At Tyr33–Ser967 the chain is on the extracellular side. Asn38 carries an N-linked (GlcNAc...) asparagine glycan. Residues Thr41–Thr61 are disordered. A metalloprotease region spans residues Lys67 to Ser967. 2 N-linked (GlcNAc...) asparagine glycosylation sites follow: Asn84 and Asn126. At Tyr175 the chain carries Sulfotyrosine. Residues Asn233 and Asn338 are each glycosylated (N-linked (GlcNAc...) asparagine). Gly351–Asn355 is a substrate binding site. Position 387 (His387) interacts with Zn(2+). Glu388 acts as the Proton acceptor in catalysis. Residues His391 and Glu410 each contribute to the Zn(2+) site. Position 418 is a sulfotyrosine (Tyr418). N-linked (GlcNAc...) asparagine glycosylation is found at Asn626, Asn682, and Asn740. The segment at Ala670 to Trp840 is interaction with FCoV and TGEV spike glycoprotein. Intrachain disulfides connect Cys762–Cys769 and Cys799–Cys835.

The protein belongs to the peptidase M1 family. Homodimer. Interacts with SLC6A19. In terms of assembly, (Microbial infection) Interacts with FCoV, CCoV, TGEV and HCoV-229E spike glycoprotein. Requires Zn(2+) as cofactor. Post-translationally, sulfated. N- and O-glycosylated. In terms of processing, may undergo proteolysis and give rise to a soluble form.

Its subcellular location is the cell membrane. The enzyme catalyses Release of an N-terminal amino acid, Xaa-|-Yaa- from a peptide, amide or arylamide. Xaa is preferably Ala, but may be most amino acids including Pro (slow action). When a terminal hydrophobic residue is followed by a prolyl residue, the two may be released as an intact Xaa-Pro dipeptide.. Its function is as follows. Broad specificity aminopeptidase which plays a role in the final digestion of peptides generated from hydrolysis of proteins by gastric and pancreatic proteases. Also involved in the processing of various peptides including peptide hormones, such as angiotensin III and IV, neuropeptides, and chemokines. May also be involved the cleavage of peptides bound to major histocompatibility complex class II molecules of antigen presenting cells. May have a role in angiogenesis and promote cholesterol crystallization. May have a role in amino acid transport by acting as binding partner of amino acid transporter SLC6A19 and regulating its activity. (Microbial infection) In case of feline coronavirus (FCoV) infection, serves as a receptor for FCoV spike glycoprotein. It is as well a receptor for other serogroup I coronaviruses, like canine coronavirus (CCoV), porcine transmissible gastroenteritis virus (TGEV), and human coronavirus 229E (HCoV-229E). Also serves as a receptor for infectious bronchitis virus (IBV, Arkansas 99 serotype) in serogroup III. The polypeptide is Aminopeptidase N (ANPEP) (Felis catus (Cat)).